The chain runs to 265 residues: Silencing boundary-establishment protein FUB1-like protein (265 aa).

The disordered stretch occupies residues 194–265; the sequence is HPENRSRNEQ…MPPGSSDMFM (72 aa).

The protein belongs to the proteasome inhibitor PI31 family. As to quaternary structure, interacts with the 20S proteasome.

It is found in the cytoplasm. The protein localises to the nucleus. Its function is as follows. May play a role in the establishment of transcriptional silencing boundaries, preventing the propagation of heterochromatic silencing. The polypeptide is Silencing boundary-establishment protein FUB1-like protein (Schizosaccharomyces pombe (strain 972 / ATCC 24843) (Fission yeast)).